Reading from the N-terminus, the 188-residue chain is Preprocaerulein type-1 (188 aa).

The first 26 residues, 1-26, serve as a signal peptide directing secretion; sequence MFKGILLCVLFAVLSANPLSQPEGFA. A propeptide spanning residues 27–170 is cleaved from the precursor; the sequence is DEERDVRGLA…ANDERRFADG (144 aa). The tract at residues 152-188 is disordered; the sequence is LGGSPQQREANDERRFADGQQDYTGWMDFGRRNGEDD. Y174 carries the sulfotyrosine modification. At F180 the chain carries Phenylalanine amide. Positions 184–188 are excised as a propeptide; that stretch reads NGEDD.

This sequence belongs to the gastrin/cholecystokinin family. As to expression, expressed by the skin glands.

The protein resides in the secreted. Functionally, the pharmacological activities of caerulein are quite similar to the physiological activities of gastrin and related peptides. This is Preprocaerulein type-1 from Xenopus laevis (African clawed frog).